The sequence spans 460 residues: Probable argininosuccinate lyase (460 aa).

Ser26, Asn114, and Thr159 together coordinate 2-(N(omega)-L-arginino)succinate. His160 serves as the catalytic Proton acceptor. Ser281 (proton donor) is an active-site residue. Positions 289, 321, 326, and 329 each coordinate 2-(N(omega)-L-arginino)succinate.

The protein belongs to the lyase 1 family. Argininosuccinate lyase subfamily. Homotetramer.

The enzyme catalyses 2-(N(omega)-L-arginino)succinate = fumarate + L-arginine. It functions in the pathway amino-acid biosynthesis; L-arginine biosynthesis; L-arginine from L-ornithine and carbamoyl phosphate: step 3/3. The polypeptide is Probable argininosuccinate lyase (argx) (Schizosaccharomyces pombe (strain 972 / ATCC 24843) (Fission yeast)).